We begin with the raw amino-acid sequence, 2130 residues long: Bromodomain adjacent to zinc finger domain protein 2B (2130 aa).

Disordered regions lie at residues 1–42 (MESG…TGAA), 82–118 (LFAP…SLNG), 151–293 (GGRK…QKQP), 491–518 (KTTG…PVSN), 543–633 (VDSD…SSIG), 756–790 (EGRR…GSTE), and 944–966 (RKKA…LNKE). A compositionally biased stretch (low complexity) spans 8 to 33 (TSSSVSSTAAASSPVSSTPSVASAVS). The span at 183–206 (ESSSNSDSDSGSSSDTSSEGISSS) shows a compositional bias: low complexity. Acidic residues predominate over residues 207 to 234 (DSDDLEEDEEEEEDQSAEESEDDESDSE). Over residues 250–270 (GVKDMKTDGQKAHEKSQEKRT) the composition is skewed to basic and acidic residues. Over residues 272-283 (QQIPLVSDSQTH) the composition is skewed to polar residues. A compositionally biased stretch (low complexity) spans 284-293 (SSFQSQQKQP). Over residues 492–505 (TTGNRTLVVPSTSP) the composition is skewed to polar residues. The span at 543 to 554 (VDSDAPSSKESD) shows a compositional bias: basic and acidic residues. Residues 555 to 611 (DSNDDDDDDEDEDEDDEDDDSDDSQSESDSNSESDTDGSEDEDDEDDKDQDESDTDT) are compositionally biased toward acidic residues. Residues 623-633 (TGSSIKSSSIG) are compositionally biased toward low complexity. The 76-residue stretch at 687–762 (VTDERELRVP…RAMEGRRGRP (76 aa)) folds into the MBD domain. Residues 756 to 775 (EGRRGRPPNPDRQHSREESR) are compositionally biased toward basic and acidic residues. Residues 797 to 984 (AKLLRKLQAQ…ELEMAKELKK (188 aa)) are a coiled coil. The 66-residue stretch at 1010–1075 (GSTFSDCLMI…VTAAVCDPGL (66 aa)) folds into the DDT domain. Disordered stretches follow at residues 1186–1265 (TGKR…DQTV), 1431–1454 (SLCS…NLFS), 1499–1545 (VTHV…PFAM), and 1773–1795 (HKKH…ERKN). Residues 1220–1244 (SDYDDDDDDDSDDQADEDDEDEEDK) are compositionally biased toward acidic residues. Residues 1245–1254 (EDKKGKKAEV) show a composition bias toward basic and acidic residues. Positions 1514–1526 (SHPPSKSPSPVPS) are enriched in pro residues. The segment at 1895–1945 (KVYCQICRKGDNEELLLLCDGCDKGCHTYCHRPKITTIPDGDWFCPACIAK) adopts a PHD-type zinc-finger fold. The segment at 1957–2019 (QIKGKKSNEQ…KQENFTAIKK (63 aa)) is disordered. The span at 1991–2002 (GKTEPKKRKMDE) shows a compositional bias: basic and acidic residues. The span at 2004 to 2014 (VSVSQGKQENF) shows a compositional bias: polar residues. In terms of domain architecture, Bromo spans 2022–2126 (RDDSKDLAIC…KYFEKKWTEI (105 aa)).

The protein belongs to the WAL family.

It is found in the nucleus. Regulatory subunit of the ATP-dependent BRF-1 and BRF-5 ISWI chromatin remodeling complexes, which form ordered nucleosome arrays on chromatin and facilitate access to DNA during DNA-templated processes such as DNA replication, transcription, and repair. Both complexes regulate the spacing of nucleosomes along the chromatin and have the ability to slide mononucleosomes to the center of a DNA template. The BRF-1 ISWI chromatin remodeling complex has a lower ATP hydrolysis rate than the BRF-5 ISWI chromatin remodeling complex. Chromatin reader protein. Represses the expression of mitochondrial function-related genes, perhaps by transcriptional regulation. The sequence is that of Bromodomain adjacent to zinc finger domain protein 2B (BAZ2B) from Gallus gallus (Chicken).